Reading from the N-terminus, the 284-residue chain is Polyamine aminopropyltransferase (284 aa).

The region spanning 2–237 (ELWYTEQHTE…GHWLFGFASK (236 aa)) is the PABS domain. Gln-31 contacts S-methyl-5'-thioadenosine. Positions 62 and 86 each coordinate spermidine. S-methyl-5'-thioadenosine is bound by residues Glu-106 and 137–138 (DG). Catalysis depends on Asp-155, which acts as the Proton acceptor. A spermidine-binding site is contributed by 155-158 (DSTD). Pro-162 contributes to the S-methyl-5'-thioadenosine binding site.

Belongs to the spermidine/spermine synthase family. As to quaternary structure, homodimer or homotetramer.

Its subcellular location is the cytoplasm. It catalyses the reaction S-adenosyl 3-(methylsulfanyl)propylamine + putrescine = S-methyl-5'-thioadenosine + spermidine + H(+). It functions in the pathway amine and polyamine biosynthesis; spermidine biosynthesis; spermidine from putrescine: step 1/1. Catalyzes the irreversible transfer of a propylamine group from the amino donor S-adenosylmethioninamine (decarboxy-AdoMet) to putrescine (1,4-diaminobutane) to yield spermidine. The sequence is that of Polyamine aminopropyltransferase from Alkaliphilus oremlandii (strain OhILAs) (Clostridium oremlandii (strain OhILAs)).